Reading from the N-terminus, the 162-residue chain is Interleukin-15 (162 aa).

The first 29 residues, 1–29 (MRISKPHLRSISIQCYLCLLLKSHFLTEA), serve as a signal peptide directing secretion. Residues 30–48 (GIHVFILGCFSAGLPKTEA) constitute a propeptide that is removed on maturation. Cystine bridges form between Cys-83/Cys-133 and Cys-90/Cys-136. N-linked (GlcNAc...) asparagine glycosylation occurs at Asn-127.

It belongs to the IL-15/IL-21 family.

It is found in the secreted. In terms of biological role, cytokine that plays a major role in the development of inflammatory and protective immune responses to microbial invaders and parasites by modulating immune cells of both the innate and adaptive immune systems. Stimulates the proliferation of natural killer cells, T-cells and B-cells and promotes the secretion of several cytokines. In monocytes, induces the production of IL8 and monocyte chemotactic protein 1/CCL2, two chemokines that attract neutrophils and monocytes respectively to sites of infection. Unlike most cytokines, which are secreted in soluble form, IL15 is expressed in association with its high affinity IL15RA on the surface of IL15-producing cells and delivers signals to target cells that express IL2RB and IL2RG receptor subunits. Binding to its receptor triggers the phosphorylation of JAK1 and JAK3 and the recruitment and subsequent phosphorylation of signal transducer and activator of transcription-3/STAT3 and STAT5. In mast cells, induces the rapid tyrosine phosphorylation of STAT6 and thereby controls mast cell survival and release of cytokines such as IL4. In Chlorocebus aethiops (Green monkey), this protein is Interleukin-15 (IL15).